The following is a 688-amino-acid chain: NADPH-dependent diflavin oxidoreductase 1 (688 aa).

Positions 26–76 (HLHRHADTSPTNQHNTSHKMTTTEPIHVTTGSGESRDHTEPRHVTPTSPNA) are disordered. Residues 33–58 (TSPTNQHNTSHKMTTTEPIHVTTGSG) show a composition bias toward polar residues. Positions 59-68 (ESRDHTEPRH) are enriched in basic and acidic residues. One can recognise a Flavodoxin-like domain in the interval 82–227 (ITIAYATETG…MYNEWQARFC (146 aa)). FMN is bound by residues 88–93 (TETGNA), 136–139 (STTG), 174–183 (LGDSSYPRFN), and Asp-209. The region spanning 277-543 (KDVLQGTVVG…KHSTPIPDLD (267 aa)) is the FAD-binding FR-type domain. Residues Arg-453, 483-486 (RLFS), and 515-518 (GVLT) contribute to the FAD site. Residues Thr-554, 607–608 (SR), and 613–617 (GGYVQ) contribute to the NADP(+) site. Trp-688 contacts FAD.

The protein belongs to the NADPH-dependent diflavin oxidoreductase NDOR1 family. This sequence in the N-terminal section; belongs to the flavodoxin family. In the C-terminal section; belongs to the flavoprotein pyridine nucleotide cytochrome reductase family. In terms of assembly, interacts with DRE2; as part of the cytosolic iron-sulfur (Fe-S) protein assembly (CIA) machinery. Requires FAD as cofactor. FMN is required as a cofactor.

Its subcellular location is the cytoplasm. The protein resides in the mitochondrion. It catalyses the reaction 2 oxidized [2Fe-2S]-[protein] + NADPH = 2 reduced [2Fe-2S]-[protein] + NADP(+) + H(+). NADPH-dependent reductase which is a central component of the cytosolic iron-sulfur (Fe-S) protein assembly (CIA) machinery. Transfers electrons from NADPH via its FAD and FMN prosthetic groups to the [2Fe-2S] cluster of DRE2, another key component of the CIA machinery. In turn, this reduced cluster provides electrons for assembly of cytosolic iron-sulfur cluster proteins. Positively controls H(2)O(2)-induced cell death. The chain is NADPH-dependent diflavin oxidoreductase 1 from Yarrowia lipolytica (strain CLIB 122 / E 150) (Yeast).